We begin with the raw amino-acid sequence, 374 residues long: 3-dehydroquinate synthase (374 aa).

The protein belongs to the archaeal-type DHQ synthase family.

The enzyme catalyses 2-amino-2,3,7-trideoxy-D-lyxo-hept-6-ulosonate + NAD(+) + H2O = 3-dehydroquinate + NH4(+) + NADH + H(+). In terms of biological role, catalyzes the oxidative deamination and cyclization of 2-amino-3,7-dideoxy-D-threo-hept-6-ulosonic acid (ADH) to yield 3-dehydroquinate (DHQ), which is fed into the canonical shikimic pathway of aromatic amino acid biosynthesis. This is 3-dehydroquinate synthase from Methanocella arvoryzae (strain DSM 22066 / NBRC 105507 / MRE50).